We begin with the raw amino-acid sequence, 551 residues long: Palmdelphin (551 aa).

An N-acetylmethionine modification is found at methionine 1. The stretch at 12-106 (QAITDKRKIQ…LQISTKEEAI (95 aa)) forms a coiled coil. A Glycyl lysine isopeptide (Lys-Gly) (interchain with G-Cter in SUMO2) cross-link involves residue lysine 125. Serine 135 bears the Phosphoserine mark. Lysine 179 is covalently cross-linked (Glycyl lysine isopeptide (Lys-Gly) (interchain with G-Cter in SUMO1); alternate). Lysine 179 is covalently cross-linked (Glycyl lysine isopeptide (Lys-Gly) (interchain with G-Cter in SUMO2); alternate). The segment covering 248–259 (ERNSKSPTEYHE) has biased composition (basic and acidic residues). Residues 248–280 (ERNSKSPTEYHEPVYANPFYRPTTPQRETVTPG) form a disordered region. Over residues 270–280 (TTPQRETVTPG) the composition is skewed to polar residues. A Phosphothreonine modification is found at threonine 271. Phosphoserine is present on residues serine 321, serine 370, serine 384, and serine 385. 2 disordered regions span residues 342–392 (TPQK…QEDE) and 449–535 (DEEE…EDPS). Residues 484–495 (KRSEASPHENTN) show a composition bias toward basic and acidic residues. Serine 498, serine 515, and serine 520 each carry phosphoserine.

This sequence belongs to the paralemmin family. In terms of assembly, interacts with GLUL. Post-translationally, phosphorylated. In terms of tissue distribution, ubiquitous. Most abundant in cardiac and skeletal muscle.

The protein localises to the cytoplasm. It localises to the cell projection. The protein resides in the dendrite. Its subcellular location is the dendritic spine. The chain is Palmdelphin (PALMD) from Homo sapiens (Human).